Here is a 217-residue protein sequence, read N- to C-terminus: LexA repressor (217 aa).

Positions 28 to 48 form a DNA-binding region, H-T-H motif; the sequence is RAEIAAEFGFSSPNAAEEHLR. Catalysis depends on for autocatalytic cleavage activity residues S136 and K173.

Belongs to the peptidase S24 family. In terms of assembly, homodimer.

It catalyses the reaction Hydrolysis of Ala-|-Gly bond in repressor LexA.. Its function is as follows. Represses a number of genes involved in the response to DNA damage (SOS response), including recA and lexA. In the presence of single-stranded DNA, RecA interacts with LexA causing an autocatalytic cleavage which disrupts the DNA-binding part of LexA, leading to derepression of the SOS regulon and eventually DNA repair. In Cupriavidus taiwanensis (strain DSM 17343 / BCRC 17206 / CCUG 44338 / CIP 107171 / LMG 19424 / R1) (Ralstonia taiwanensis (strain LMG 19424)), this protein is LexA repressor.